A 31-amino-acid polypeptide reads, in one-letter code: Cytochrome b6-f complex subunit 6 (31 aa).

Residues 4–24 (LLSYFAFLMLALTFTLALFVG) traverse the membrane as a helical segment.

The protein belongs to the PetL family. In terms of assembly, the 4 large subunits of the cytochrome b6-f complex are cytochrome b6, subunit IV (17 kDa polypeptide, PetD), cytochrome f and the Rieske protein, while the 4 small subunits are PetG, PetL, PetM and PetN. The complex functions as a dimer.

The protein localises to the plastid. Its subcellular location is the chloroplast thylakoid membrane. In terms of biological role, component of the cytochrome b6-f complex, which mediates electron transfer between photosystem II (PSII) and photosystem I (PSI), cyclic electron flow around PSI, and state transitions. PetL is important for photoautotrophic growth as well as for electron transfer efficiency and stability of the cytochrome b6-f complex. This Adiantum capillus-veneris (Maidenhair fern) protein is Cytochrome b6-f complex subunit 6.